The chain runs to 162 residues: Putative 4-hydroxy-4-methyl-2-oxoglutarate aldolase (162 aa).

Substrate contacts are provided by residues glycine 75–leucine 78 and arginine 97. Aspartate 98 serves as a coordination point for a divalent metal cation.

The protein belongs to the class II aldolase/RraA-like family. Homotrimer. A divalent metal cation serves as cofactor.

It catalyses the reaction 4-hydroxy-4-methyl-2-oxoglutarate = 2 pyruvate. The enzyme catalyses oxaloacetate + H(+) = pyruvate + CO2. Functionally, catalyzes the aldol cleavage of 4-hydroxy-4-methyl-2-oxoglutarate (HMG) into 2 molecules of pyruvate. Also contains a secondary oxaloacetate (OAA) decarboxylase activity due to the common pyruvate enolate transition state formed following C-C bond cleavage in the retro-aldol and decarboxylation reactions. This is Putative 4-hydroxy-4-methyl-2-oxoglutarate aldolase from Azotobacter vinelandii (strain DJ / ATCC BAA-1303).